A 77-amino-acid chain; its full sequence is U14-theraphotoxin-Cg1b (77 aa).

Positions 1 to 21 are cleaved as a signal peptide; the sequence is MKTSVLLVILGIAAITVQCTA. Residues 22-49 constitute a propeptide that is removed on maturation; that stretch reads SESVEQDSLRTFVDAVLGWNAEMASEAR. Intrachain disulfides connect Cys50/Cys64, Cys57/Cys69, and Cys63/Cys75.

It belongs to the neurotoxin 10 (Hwtx-1) family. 65 (Jztx-21) subfamily. In terms of tissue distribution, expressed by the venom gland.

The protein localises to the secreted. Its function is as follows. Probable ion channel inhibitor. This Chilobrachys guangxiensis (Chinese earth tiger tarantula) protein is U14-theraphotoxin-Cg1b.